A 77-amino-acid chain; its full sequence is TSC22 domain family protein 3 (77 aa).

M1 carries the N-acetylmethionine modification. The leucine-zipper stretch occupies residues 19–40; the sequence is LKEQIRELVEKNSQLERENTLL. Positions 41 to 77 are disordered; that stretch reads KTLASPEQLEKFQSRLSPEEPAPETPEAPEAPGGSAV. At S45 the chain carries Phosphoserine. Over residues 68 to 77 the composition is skewed to low complexity; it reads APEAPGGSAV.

The protein belongs to the TSC-22/Dip/Bun family. As to quaternary structure, can form homodimers, however it is likely to function as a monomer. Interacts with AP1 and NFKB1. Interacts with MYOD1. Interacts with HDAC1; this interaction affects HDAC1 activity on MYOG promoter and thus inhibits MYOD1 transcriptional activity.

The protein resides in the cytoplasm. It localises to the nucleus. Its function is as follows. Protects T-cells from IL2 deprivation-induced apoptosis through the inhibition of FOXO3A transcriptional activity that leads to the down-regulation of the pro-apoptotic factor BCL2L11. In macrophages, plays a role in the anti-inflammatory and immunosuppressive effects of glucocorticoids and IL10. In T-cells, inhibits anti-CD3-induced NFKB1 nuclear translocation. In vitro, suppresses AP1 and NFKB1 DNA-binding activities. Inhibits myogenic differentiation and mediates anti-myogenic effects of glucocorticoids by binding and regulating MYOD1 and HDAC1 transcriptional activity resulting in reduced expression of MYOG. The polypeptide is TSC22 domain family protein 3 (TSC22D3) (Sus scrofa (Pig)).